We begin with the raw amino-acid sequence, 162 residues long: Cyclic pyranopterin monophosphate synthase (162 aa).

Residues 75 to 77 (LCH) and 113 to 114 (ME) each bind substrate. The active site involves D128.

The protein belongs to the MoaC family. As to quaternary structure, homohexamer; trimer of dimers.

It carries out the reaction (8S)-3',8-cyclo-7,8-dihydroguanosine 5'-triphosphate = cyclic pyranopterin phosphate + diphosphate. The protein operates within cofactor biosynthesis; molybdopterin biosynthesis. In terms of biological role, catalyzes the conversion of (8S)-3',8-cyclo-7,8-dihydroguanosine 5'-triphosphate to cyclic pyranopterin monophosphate (cPMP). This is Cyclic pyranopterin monophosphate synthase from Burkholderia ambifaria (strain MC40-6).